A 136-amino-acid chain; its full sequence is Flagellar assembly factor FliW 2 (136 aa).

The protein belongs to the FliW family. Interacts with translational regulator CsrA and flagellin(s).

The protein localises to the cytoplasm. Functionally, acts as an anti-CsrA protein, binds CsrA and prevents it from repressing translation of its target genes, one of which is flagellin. Binds to flagellin and participates in the assembly of the flagellum. This is Flagellar assembly factor FliW 2 from Wolinella succinogenes (strain ATCC 29543 / DSM 1740 / CCUG 13145 / JCM 31913 / LMG 7466 / NCTC 11488 / FDC 602W) (Vibrio succinogenes).